A 411-amino-acid polypeptide reads, in one-letter code: Multidrug resistance protein MdtH (411 aa).

11 helical membrane passes run 13 to 33 (YFLL…FPLI), 45 to 65 (ALLV…LGIF), 73 to 95 (LGAK…FMGI), 99 to 116 (PWLL…GTLF), 139 to 159 (LLMI…SWLL), 165 to 185 (LVCL…AWLL), 213 to 233 (YVFT…ILPI), 243 to 263 (AAVR…LYPI), 288 to 308 (IIPI…GIFY), 340 to 360 (LGLA…YDMG), and 365 to 385 (IPQL…LGFY).

The protein belongs to the major facilitator superfamily. DHA1 family. MdtH (TC 2.A.1.2.21) subfamily.

Its subcellular location is the cell membrane. This Baumannia cicadellinicola subsp. Homalodisca coagulata protein is Multidrug resistance protein MdtH.